We begin with the raw amino-acid sequence, 396 residues long: Putative nickel insertion protein (396 aa).

The protein belongs to the LarC family.

In Wolinella succinogenes (strain ATCC 29543 / DSM 1740 / CCUG 13145 / JCM 31913 / LMG 7466 / NCTC 11488 / FDC 602W) (Vibrio succinogenes), this protein is Putative nickel insertion protein.